A 348-amino-acid polypeptide reads, in one-letter code: MLIKQGDRLINTRNWSELVKPDQISRASESADTMYGKFVCEPLERGYGTTIGNAMRRVLLASLQGAAFVAVKISGVQHEFTTIPGVLEDVTDIVLNLKQVRLAMDTEEPQHLELHVNKSGEVKAGDIKCNQHVMVLNADQHLMTLTEDVELTFELEVRMGKGYVPADMHEGLSDEIGLIALDASFSPVRKVAYTVEQARVGQMTNYDKLILEVWTDGSISPEDAIAYSAKIIKDQISVFINFDERISEQENEGRSSASDVNENLFKGIDELELSVRATNCLKSANISLVGELVQKSEGEMLKTKNFGRKSLDEIRRVLGEMSLDFGMKVDGFEKKYQEWLKRKQQNEA.

The alpha N-terminal domain (alpha-NTD) stretch occupies residues 1–243 (MLIKQGDRLI…DQISVFINFD (243 aa)). The alpha C-terminal domain (alpha-CTD) stretch occupies residues 260–348 (VNENLFKGID…WLKRKQQNEA (89 aa)).

Belongs to the RNA polymerase alpha chain family. As to quaternary structure, homodimer. The RNAP catalytic core consists of 2 alpha, 1 beta, 1 beta' and 1 omega subunit. When a sigma factor is associated with the core the holoenzyme is formed, which can initiate transcription.

It catalyses the reaction RNA(n) + a ribonucleoside 5'-triphosphate = RNA(n+1) + diphosphate. Functionally, DNA-dependent RNA polymerase catalyzes the transcription of DNA into RNA using the four ribonucleoside triphosphates as substrates. The chain is DNA-directed RNA polymerase subunit alpha from Oleidesulfovibrio alaskensis (strain ATCC BAA-1058 / DSM 17464 / G20) (Desulfovibrio alaskensis).